We begin with the raw amino-acid sequence, 518 residues long: D-aminopeptidase (518 aa).

Serine 62 functions as the Nucleophile in the catalytic mechanism. Lysine 65 serves as the catalytic Proton donor/acceptor. Positions 477–487 (QRSMDAPSPGE) are important for specificity. Aspartate 481 provides a ligand contact to substrate.

It belongs to the peptidase S12 family. As to quaternary structure, homodimer.

It catalyses the reaction Release of an N-terminal D-amino acid from a peptide, Xaa-|-Yaa-, in which Xaa is preferably D-Ala, D-Ser or D-Thr. D-amino acid amides and methyl esters also are hydrolyzed, as is glycine amide.. Its activity is regulated as follows. Inhibited by beta-lactam compounds such as 6-aminopenicillic acid, 7-aminocephalosporanic acid, benzylpenicillin and ampicillin. Inhibited by p-chloromercuribenzoate. Hydrolyzes N-terminal residues in D-amino acid-containing peptides. The chain is D-aminopeptidase from Brucella ovis (strain ATCC 25840 / 63/290 / NCTC 10512).